The following is a 734-amino-acid chain: Fc receptor-like protein 3 (734 aa).

The signal sequence occupies residues 1–17; it reads MLLWLLLLILTPGREQS. Topologically, residues 18–573 are extracellular; that stretch reads GVAPKAVLLL…GTSRNRTGLT (556 aa). Ig-like C2-type domains follow at residues 21–98, 99–182, 192–270, 284–369, 383–470, and 476–563; these read PKAV…VEFS, PDWL…KPLN, PVLR…HSIK, PVSN…PILS, PVLT…LRVT, and PVLT…LNVT. Cystine bridges form between Cys-44-Cys-82, Cys-120-Cys-163, Cys-211-Cys-260, Cys-309-Cys-358, Cys-404-Cys-451, and Cys-497-Cys-544. An N-linked (GlcNAc...) asparagine glycan is attached at Asn-561. Residues 574-594 form a helical membrane-spanning segment; it reads AAGITGLVLSILVLAAAAALL. Residues 595–734 lie on the Cytoplasmic side of the membrane; that stretch reads HYARARRKPG…VPRVLLASDH (140 aa). The tract at residues 603–655 is disordered; the sequence is PGGLSATGTSSHSPSECQEPSSSRPSRIDPQEPTHSKPLAPMELEPMYSNVNP. A compositionally biased stretch (polar residues) spans 608 to 627; the sequence is ATGTSSHSPSECQEPSSSRP. Over residues 628-637 the composition is skewed to basic and acidic residues; it reads SRIDPQEPTH. 4 consecutive short sequence motifs (ITIM motif) follow at residues 648–653, 660–665, 690–695, and 720–725; these read PMYSNV, PIYSQI, VLYSEL, and ENYENV. 4 positions are modified to phosphotyrosine: Tyr-650, Tyr-662, Tyr-692, and Tyr-722. A disordered region spans residues 695–734; sequence LKKTHPDDSAGEASSRGRAHEEDDEENYENVPRVLLASDH.

As to quaternary structure, interacts (via phosphorylated ITIM motifs) with phosphatases INPP5D, PTPN6 and PTPN11. Interacts (via ITIM motifs) SYK and ZAP70. Interacts with IZUMO1R/JUNO. Interacts (via extracellular domain) with IZUMO1; the interaction replaces IZUMO1R/JUNO as IZUMO1 receptor after adhesion between sperm and egg. Phosphorylated on cytoplasmic tyrosines; required for interaction with protein tyrosine phosphatases and protein tyrosine kinases. Primarily expressed in secondary lymphoid tissues by mature subsets of B-cells. Low expression on transitional B cells which increases to higher surface expression on mature and memory B-cells with innate-like features (at protein level). Expressed a low levels in naive and germinal center B-cells but also expressed in NK cells (at protein level). Expressed in unfertilized oocytes (at protein level). Expressed in a population of thymically derived naturally occurring regulatory T-cells that exhibits a memory phenotype, specialized in suppressing immune response to self-antigens. Detected in spleen, lymph node, peripheral blood lymphocytes, thymus, bone marrow, kidney, salivary gland, adrenal gland and uterus.

It localises to the cell membrane. The protein localises to the cell projection. The protein resides in the microvillus membrane. In terms of biological role, promotes TLR9-induced B-cell proliferation, activation and survival but inhibits antibody production and suppresses plasma cell differentiation. Enhances activation of NF-kappa-B and MAPK signaling pathways in TLR9 stimulated B-cells. Has inhibitory potentional on B-cell receptor (BCR)-mediated signaling, possibly through association with SH2 domain-containing phosphatases. Inhibits cell tyrosine phosphorylation, calcium mobilization and activation-induced cell death induced through BCR signaling. Regulatory T-cells expressing FCRL3 exhibit a memory phenotype, are relatively nonresponsive to antigenic stimulation in presence of IL2 and have reduced capacity to suppress the proliferation of effector T-cells. Acts as a human-specific epitope on the cell surface of oocytes (oolemma) and plays a role during sperm-egg adhesion and fusion. Interacts with the IZUMO1-IZUMO1R/JUNO sperm-egg complex and replaces IZUMO1R/JUNO as IZUMO1 receptor during fertilization, thereby permitting species-specific gamete fusion. This chain is Fc receptor-like protein 3, found in Homo sapiens (Human).